The following is a 388-amino-acid chain: Chorismate synthase (388 aa).

The NADP(+) site is built by Arg-39 and Arg-45. FMN contacts are provided by residues 130–132 (RSS), 251–252 (NA), Gly-296, 311–315 (KPIPT), and Arg-337.

Belongs to the chorismate synthase family. As to quaternary structure, homotetramer. It depends on FMNH2 as a cofactor.

The enzyme catalyses 5-O-(1-carboxyvinyl)-3-phosphoshikimate = chorismate + phosphate. It participates in metabolic intermediate biosynthesis; chorismate biosynthesis; chorismate from D-erythrose 4-phosphate and phosphoenolpyruvate: step 7/7. Its function is as follows. Catalyzes the anti-1,4-elimination of the C-3 phosphate and the C-6 proR hydrogen from 5-enolpyruvylshikimate-3-phosphate (EPSP) to yield chorismate, which is the branch point compound that serves as the starting substrate for the three terminal pathways of aromatic amino acid biosynthesis. This reaction introduces a second double bond into the aromatic ring system. This is Chorismate synthase from Streptococcus agalactiae serotype III (strain NEM316).